A 383-amino-acid chain; its full sequence is Heme chaperone HemW (383 aa).

Residues 1–241 (MPKLPPLSLY…LTMAGYQQYE (241 aa)) enclose the Radical SAM core domain. Tyr-10 contacts S-adenosyl-L-methionine. [4Fe-4S] cluster contacts are provided by Cys-16, Cys-20, and Cys-23. Residues Gly-70, 71–72 (GT), Glu-103, Gln-130, Arg-142, and Asp-167 contribute to the S-adenosyl-L-methionine site.

This sequence belongs to the anaerobic coproporphyrinogen-III oxidase family. HemW subfamily. [4Fe-4S] cluster serves as cofactor.

The protein localises to the cytoplasm. Its function is as follows. Probably acts as a heme chaperone, transferring heme to an unknown acceptor. Binds one molecule of heme per monomer, possibly covalently. Binds 1 [4Fe-4S] cluster. The cluster is coordinated with 3 cysteines and an exchangeable S-adenosyl-L-methionine. The polypeptide is Heme chaperone HemW (Haemophilus influenzae (strain ATCC 51907 / DSM 11121 / KW20 / Rd)).